Here is a 255-residue protein sequence, read N- to C-terminus: Small ribosomal subunit protein eS4 (255 aa).

The 64-residue stretch at 44–107 folds into the S4 RNA-binding domain; that stretch reads IPLLILVRDV…DEYYRMIPYP (64 aa).

Belongs to the eukaryotic ribosomal protein eS4 family.

The polypeptide is Small ribosomal subunit protein eS4 (Ignicoccus hospitalis (strain KIN4/I / DSM 18386 / JCM 14125)).